A 161-amino-acid polypeptide reads, in one-letter code: Troponin C, slow skeletal and cardiac muscles (161 aa).

The residue at position 1 (Met-1) is an N-acetylmethionine. 4 EF-hand domains span residues 16–51 (QKNE…LGQN), 52–87 (PTPE…CMKD), 92–127 (KSEE…TGET), and 128–161 (ITED…KGVE). The Ca(2+) site is built by Asp-65, Asp-67, Ser-69, Thr-71, and Glu-76. Ser-98 bears the Phosphoserine mark. Asp-105, Asn-107, Asp-109, Tyr-111, Glu-116, Asp-141, Asn-143, Asp-145, Arg-147, and Glu-152 together coordinate Ca(2+).

It belongs to the troponin C family.

Troponin is the central regulatory protein of striated muscle contraction. Tn consists of three components: Tn-I which is the inhibitor of actomyosin ATPase, Tn-T which contains the binding site for tropomyosin and Tn-C. The binding of calcium to Tn-C abolishes the inhibitory action of Tn on actin filaments. This is Troponin C, slow skeletal and cardiac muscles (TNNC1) from Bos taurus (Bovine).